The sequence spans 434 residues: Trigger factor (434 aa).

In terms of domain architecture, PPIase FKBP-type spans 161-246; that stretch reads EDRATIDFSG…LKKVEERELP (86 aa).

Belongs to the FKBP-type PPIase family. Tig subfamily.

The protein localises to the cytoplasm. The enzyme catalyses [protein]-peptidylproline (omega=180) = [protein]-peptidylproline (omega=0). Functionally, involved in protein export. Acts as a chaperone by maintaining the newly synthesized protein in an open conformation. Functions as a peptidyl-prolyl cis-trans isomerase. This Erwinia tasmaniensis (strain DSM 17950 / CFBP 7177 / CIP 109463 / NCPPB 4357 / Et1/99) protein is Trigger factor.